The sequence spans 519 residues: 3-octaprenyl-4-hydroxybenzoate carboxy-lyase (519 aa).

A Mn(2+)-binding site is contributed by N177. Prenylated FMN is bound by residues 180–182 (IYR), 194–196 (RWL), and 199–200 (RG). E243 contacts Mn(2+). D318 acts as the Proton donor in catalysis.

Belongs to the UbiD family. Homohexamer. Requires prenylated FMN as cofactor. The cofactor is Mn(2+).

It localises to the cell membrane. It catalyses the reaction a 4-hydroxy-3-(all-trans-polyprenyl)benzoate + H(+) = a 2-(all-trans-polyprenyl)phenol + CO2. Its pathway is cofactor biosynthesis; ubiquinone biosynthesis. In terms of biological role, catalyzes the decarboxylation of 3-octaprenyl-4-hydroxy benzoate to 2-octaprenylphenol, an intermediate step in ubiquinone biosynthesis. The protein is 3-octaprenyl-4-hydroxybenzoate carboxy-lyase of Burkholderia pseudomallei (strain 1710b).